Reading from the N-terminus, the 89-residue chain is Small ribosomal subunit protein uS15 (89 aa).

This sequence belongs to the universal ribosomal protein uS15 family. Part of the 30S ribosomal subunit. Forms a bridge to the 50S subunit in the 70S ribosome, contacting the 23S rRNA.

Functionally, one of the primary rRNA binding proteins, it binds directly to 16S rRNA where it helps nucleate assembly of the platform of the 30S subunit by binding and bridging several RNA helices of the 16S rRNA. Its function is as follows. Forms an intersubunit bridge (bridge B4) with the 23S rRNA of the 50S subunit in the ribosome. The chain is Small ribosomal subunit protein uS15 from Thiobacillus denitrificans (strain ATCC 25259 / T1).